Reading from the N-terminus, the 122-residue chain is Large ribosomal subunit protein uL14c (122 aa).

Belongs to the universal ribosomal protein uL14 family. Part of the 50S ribosomal subunit.

The protein resides in the plastid. The protein localises to the chloroplast. Binds to 23S rRNA. This chain is Large ribosomal subunit protein uL14c, found in Chlorella vulgaris (Green alga).